The following is a 504-amino-acid chain: L-amino-acid oxidase (504 aa).

Positions 1-18 are cleaved as a signal peptide; sequence MNVFFMFSLLFLAALGSC. Cys28 and Cys191 are oxidised to a cystine. FAD is bound by residues 61 to 62, 81 to 82, Arg89, and 105 to 108; these read MS, EA, and GPMR. Substrate is bound at residue Arg108. A glycan (N-linked (GlcNAc...) asparagine) is linked at Asn190. His241 serves as a coordination point for substrate. Residue Val279 participates in FAD binding. Cys349 and Cys430 are oxidised to a cystine. A glycan (N-linked (GlcNAc...) asparagine) is linked at Asn379. Tyr390 contributes to the substrate binding site. FAD-binding positions include Glu475 and 482–487; that span reads GWIDST. 482–483 is a substrate binding site; the sequence is GW.

It belongs to the flavin monoamine oxidase family. FIG1 subfamily. As to quaternary structure, homodimer; non-covalently linked. FAD serves as cofactor. As to expression, expressed by the venom gland.

It localises to the secreted. The catalysed reaction is an L-alpha-amino acid + O2 + H2O = a 2-oxocarboxylate + H2O2 + NH4(+). It catalyses the reaction L-leucine + O2 + H2O = 4-methyl-2-oxopentanoate + H2O2 + NH4(+). In terms of biological role, catalyzes an oxidative deamination of predominantly hydrophobic and aromatic L-amino acids, thus producing hydrogen peroxide that may contribute to the diverse toxic effects of this enzyme. Shows activity on L-Leu. Exhibits diverse biological activities, such as apoptosis, and inhibition of agonist- and shear stress-induced platelet aggregation (SIPA). Effects of snake L-amino oxidases on platelets are controversial, since they either induce aggregation or inhibit agonist-induced aggregation. These different effects are probably due to different experimental conditions. This protein may also induce hemorrhage, hemolysis, edema, antibacterial and antiparasitic activities. The polypeptide is L-amino-acid oxidase (Gloydius blomhoffii (Mamushi)).